The following is a 176-amino-acid chain: Isopentenyl-diphosphate Delta-isomerase (176 aa).

2 residues coordinate Mn(2+): H22 and H28. Residues 26–160 enclose the Nudix hydrolase domain; it reads LRHKAVSVFV…PDRYTPWLRI (135 aa). The active site involves C62. H64 serves as a coordination point for Mn(2+). Mg(2+) is bound at residue E82. Residues E108 and E110 each contribute to the Mn(2+) site. Residue E110 is part of the active site.

This sequence belongs to the IPP isomerase type 1 family. Mg(2+) is required as a cofactor. Requires Mn(2+) as cofactor.

Its subcellular location is the cytoplasm. The enzyme catalyses isopentenyl diphosphate = dimethylallyl diphosphate. It functions in the pathway isoprenoid biosynthesis; dimethylallyl diphosphate biosynthesis; dimethylallyl diphosphate from isopentenyl diphosphate: step 1/1. The protein operates within porphyrin-containing compound metabolism; chlorophyll biosynthesis. In terms of biological role, catalyzes the 1,3-allylic rearrangement of the homoallylic substrate isopentenyl (IPP) to its highly electrophilic allylic isomer, dimethylallyl diphosphate (DMAPP). The sequence is that of Isopentenyl-diphosphate Delta-isomerase from Roseobacter denitrificans (strain ATCC 33942 / OCh 114) (Erythrobacter sp. (strain OCh 114)).